The chain runs to 258 residues: Deoxyribose-phosphate aldolase (258 aa).

Asp-101 (proton donor/acceptor) is an active-site residue. Residue Lys-166 is the Schiff-base intermediate with acetaldehyde of the active site. The active-site Proton donor/acceptor is the Lys-200.

It belongs to the DeoC/FbaB aldolase family. DeoC type 2 subfamily.

It localises to the cytoplasm. The enzyme catalyses 2-deoxy-D-ribose 5-phosphate = D-glyceraldehyde 3-phosphate + acetaldehyde. It functions in the pathway carbohydrate degradation; 2-deoxy-D-ribose 1-phosphate degradation; D-glyceraldehyde 3-phosphate and acetaldehyde from 2-deoxy-alpha-D-ribose 1-phosphate: step 2/2. Catalyzes a reversible aldol reaction between acetaldehyde and D-glyceraldehyde 3-phosphate to generate 2-deoxy-D-ribose 5-phosphate. This Actinobacillus pleuropneumoniae serotype 7 (strain AP76) protein is Deoxyribose-phosphate aldolase.